The sequence spans 339 residues: Adenylosuccinate synthetase (339 aa).

GTP contacts are provided by residues 12–18 and 42–44; these read GDEGKGS and GHS. Asp-13 serves as the catalytic Proton acceptor. Positions 13 and 42 each coordinate Mg(2+). Residues 13-16, 40-43, Thr-127, Arg-141, Gln-179, Thr-194, and Arg-256 contribute to the IMP site; these read DEGK and NAGH. The active-site Proton donor is His-43. Substrate is bound at residue 252-258; it reads TVTGRRR. Residues Arg-258, 284–286, and 324–326 each bind GTP; these read MLD and KTG.

Belongs to the adenylosuccinate synthetase family. In terms of assembly, homodimer. Mg(2+) serves as cofactor.

Its subcellular location is the cytoplasm. The enzyme catalyses IMP + L-aspartate + GTP = N(6)-(1,2-dicarboxyethyl)-AMP + GDP + phosphate + 2 H(+). Its pathway is purine metabolism; AMP biosynthesis via de novo pathway; AMP from IMP: step 1/2. Plays an important role in the de novo pathway of purine nucleotide biosynthesis. Catalyzes the first committed step in the biosynthesis of AMP from IMP. In Pyrococcus horikoshii (strain ATCC 700860 / DSM 12428 / JCM 9974 / NBRC 100139 / OT-3), this protein is Adenylosuccinate synthetase.